The following is a 193-amino-acid chain: 7-methyl-GTP pyrophosphatase (193 aa).

The Proton acceptor role is filled by D70.

It belongs to the Maf family. YceF subfamily. A divalent metal cation serves as cofactor.

It is found in the cytoplasm. It carries out the reaction N(7)-methyl-GTP + H2O = N(7)-methyl-GMP + diphosphate + H(+). Functionally, nucleoside triphosphate pyrophosphatase that hydrolyzes 7-methyl-GTP (m(7)GTP). May have a dual role in cell division arrest and in preventing the incorporation of modified nucleotides into cellular nucleic acids. In Aliivibrio fischeri (strain ATCC 700601 / ES114) (Vibrio fischeri), this protein is 7-methyl-GTP pyrophosphatase.